The primary structure comprises 192 residues: MAVFLLLLALGLLLAKPSESRMKGTTEQFSQEEMQPAAKQTLEESANSTLSDKNTGLSISKHVMSATPLTPRRLSFIIPKGNTMRDGRNCVNSLRVWRTEVDGNASCQLGNDFIHGSMDVSLRIPKATRGKCEQTPKPSSSGSLGLERTTCKVLAGHQCLRSHEHSITSLKKILTVLASNSLMSWLVSGCKL.

The signal sequence occupies residues 1–15 (MAVFLLLLALGLLLA). Positions 21–54 (RMKGTTEQFSQEEMQPAAKQTLEESANSTLSDKN) are disordered. Polar residues predominate over residues 43–54 (EESANSTLSDKN). N-linked (GlcNAc...) asparagine glycosylation is found at N47 and N104.

This sequence belongs to the pancreatic ribonuclease family.

It localises to the secreted. The chain is Putative inactive ribonuclease 11 (Rnase11) from Mus musculus (Mouse).